A 173-amino-acid chain; its full sequence is NADH-quinone oxidoreductase subunit B (173 aa).

Residues Cys-46, Cys-47, Cys-112, and Cys-142 each contribute to the [4Fe-4S] cluster site.

This sequence belongs to the complex I 20 kDa subunit family. NDH-1 is composed of 14 different subunits. Subunits NuoB, C, D, E, F, and G constitute the peripheral sector of the complex. [4Fe-4S] cluster is required as a cofactor.

It is found in the cell membrane. The catalysed reaction is a quinone + NADH + 5 H(+)(in) = a quinol + NAD(+) + 4 H(+)(out). NDH-1 shuttles electrons from NADH, via FMN and iron-sulfur (Fe-S) centers, to quinones in the respiratory chain. The immediate electron acceptor for the enzyme in this species is believed to be a menaquinone. Couples the redox reaction to proton translocation (for every two electrons transferred, four hydrogen ions are translocated across the cytoplasmic membrane), and thus conserves the redox energy in a proton gradient. The polypeptide is NADH-quinone oxidoreductase subunit B (Desulfitobacterium hafniense (strain DSM 10664 / DCB-2)).